A 621-amino-acid polypeptide reads, in one-letter code: Elongation factor 4 (621 aa).

Residues 21–203 (DLIRNICIIA…AIVKRVPPPK (183 aa)) enclose the tr-type G domain. GTP is bound by residues 33 to 38 (DHGKTT) and 150 to 153 (NKID).

It belongs to the TRAFAC class translation factor GTPase superfamily. Classic translation factor GTPase family. LepA subfamily.

The protein resides in the cell inner membrane. It carries out the reaction GTP + H2O = GDP + phosphate + H(+). Functionally, required for accurate and efficient protein synthesis under certain stress conditions. May act as a fidelity factor of the translation reaction, by catalyzing a one-codon backward translocation of tRNAs on improperly translocated ribosomes. Back-translocation proceeds from a post-translocation (POST) complex to a pre-translocation (PRE) complex, thus giving elongation factor G a second chance to translocate the tRNAs correctly. Binds to ribosomes in a GTP-dependent manner. The protein is Elongation factor 4 of Thermotoga maritima (strain ATCC 43589 / DSM 3109 / JCM 10099 / NBRC 100826 / MSB8).